A 109-amino-acid chain; its full sequence is Cyclic di-AMP receptor A (109 aa).

Residues Thr-21, Phe-25, Thr-28, Gly-35, Phe-36, Leu-37, Asn-41, Gly-47, Glu-92, and Gly-94 each coordinate 3',3'-c-di-AMP.

In terms of assembly, homotrimer.

Its subcellular location is the cytoplasm. Functionally, binds cyclic di-AMP (c-di-AMP) and is probably involved in c-di-AMP-mediated signaling pathways. In vitro, can also bind cyclic GMP-AMP (3'3'-cGAMP), with lower affinity, but not c-di-GMP or 2'3'-cGAMP. The chain is Cyclic di-AMP receptor A from Bacillus subtilis (strain 168).